We begin with the raw amino-acid sequence, 78 residues long: Translation initiation factor IF-1, chloroplastic (78 aa).

An S1-like domain is found at 1 to 72 (MKKQKLIDME…TKGRITYRFH (72 aa)).

The protein belongs to the IF-1 family. Component of the 30S ribosomal translation pre-initiation complex which assembles on the 30S ribosome in the order IF-2 and IF-3, IF-1 and N-formylmethionyl-tRNA(fMet); mRNA recruitment can occur at any time during PIC assembly.

It is found in the plastid. The protein resides in the chloroplast. Its function is as follows. One of the essential components for the initiation of protein synthesis. Stabilizes the binding of IF-2 and IF-3 on the 30S subunit to which N-formylmethionyl-tRNA(fMet) subsequently binds. Helps modulate mRNA selection, yielding the 30S pre-initiation complex (PIC). Upon addition of the 50S ribosomal subunit IF-1, IF-2 and IF-3 are released leaving the mature 70S translation initiation complex. The chain is Translation initiation factor IF-1, chloroplastic from Huperzia lucidula (Shining clubmoss).